A 446-amino-acid chain; its full sequence is Probable D-serine dehydratase (446 aa).

Lysine 116 bears the N6-(pyridoxal phosphate)lysine mark.

It belongs to the serine/threonine dehydratase family. DsdA subfamily. The cofactor is pyridoxal 5'-phosphate.

The enzyme catalyses D-serine = pyruvate + NH4(+). This is Probable D-serine dehydratase from Bacillus cereus (strain ZK / E33L).